Here is a 362-residue protein sequence, read N- to C-terminus: Molybdenum import ATP-binding protein ModC (362 aa).

In terms of domain architecture, ABC transporter spans 2–236 (ASPIEVRLQM…LDLPLAMGSD (235 aa)). 34 to 41 (GPSGSGKT) contacts ATP. The 66-residue stretch at 297–362 (QSSILNRLPV…AQIKAVAVLA (66 aa)) folds into the Mop domain.

This sequence belongs to the ABC transporter superfamily. Molybdate importer (TC 3.A.1.8) family. As to quaternary structure, the complex is composed of two ATP-binding proteins (ModC), two transmembrane proteins (ModB) and a solute-binding protein (ModA).

It is found in the cell inner membrane. The catalysed reaction is molybdate(out) + ATP + H2O = molybdate(in) + ADP + phosphate + H(+). Its function is as follows. Part of the ABC transporter complex ModABC involved in molybdenum import. Responsible for energy coupling to the transport system. The protein is Molybdenum import ATP-binding protein ModC of Pseudomonas syringae pv. syringae (strain B728a).